Here is a 480-residue protein sequence, read N- to C-terminus: Wax ester synthase/diacylglycerol acyltransferase 7 (480 aa).

At 1-193 (MTYGEEEPVS…LRSIFTIGST (193 aa)) the chain is on the cytoplasmic side. Histidine 135 functions as the Proton acceptor in the catalytic mechanism. A helical membrane pass occupies residues 194 to 214 (MRLLWNTTIDMLLLLATVLFL). At 215–329 (KDTKTPLKAG…VKDSKCRWGN (115 aa)) the chain is on the lumenal side. The N-linked (GlcNAc...) asparagine glycan is linked to asparagine 252. The chain crosses the membrane as a helical span at residues 330-350 (YFSFIFLPFTIGLQTDPLVYL). The Cytoplasmic portion of the chain corresponds to 351–365 (KMSKSMMARKKHSYH). Residues 366-386 (AALVYFIIKIVLKVFGAKAAA) form a helical membrane-spanning segment. Over 387–480 (ELFDRPVRNT…KASLCERGLL (94 aa)) the chain is Lumenal. Asparagine 395 is a glycosylation site (N-linked (GlcNAc...) asparagine).

In the N-terminal section; belongs to the long-chain O-acyltransferase family. Expressed in roots, stems, leaves, flowers and siliques.

It localises to the cell membrane. The protein resides in the endoplasmic reticulum membrane. It is found in the golgi apparatus membrane. The enzyme catalyses an acyl-CoA + a 1,2-diacyl-sn-glycerol = a triacyl-sn-glycerol + CoA. It catalyses the reaction a long chain fatty alcohol + a fatty acyl-CoA = a wax ester + CoA. It participates in glycerolipid metabolism; triacylglycerol biosynthesis. Its pathway is lipid metabolism. Bifunctional wax ester synthase/diacylglycerol acyltransferase that uses acyl-CoAs with 14, 16 and 18 carbons as substrates, preferably in combination with 16:0ol alcohol. Involved in cuticular wax biosynthesis. This chain is Wax ester synthase/diacylglycerol acyltransferase 7, found in Arabidopsis thaliana (Mouse-ear cress).